The following is a 181-amino-acid chain: Adenine phosphoribosyltransferase (181 aa).

This sequence belongs to the purine/pyrimidine phosphoribosyltransferase family. As to quaternary structure, homodimer.

The protein resides in the cytoplasm. It carries out the reaction AMP + diphosphate = 5-phospho-alpha-D-ribose 1-diphosphate + adenine. Its pathway is purine metabolism; AMP biosynthesis via salvage pathway; AMP from adenine: step 1/1. In terms of biological role, catalyzes a salvage reaction resulting in the formation of AMP, that is energically less costly than de novo synthesis. The chain is Adenine phosphoribosyltransferase from Vibrio vulnificus (strain CMCP6).